The primary structure comprises 394 residues: MAVAFNRDKPHCNIGTIGHVDHGKTSLATAITIVSSELSGGAVKVKNYDEIDSAPEERARGITIQTAHVEFISKKRHYALVDCPGHVDYIKNMITGASQTDGLILVVSGVDGVMPQTREHVLLAKQVGVPSIIVCINKIDQADPELLELIEMEVRELLTKYDFPGDTVPIIRCSALKAINGDSDAKKGILELMDSIDDYIPQPTRVLDQPFLMPIEDVFSILGRGTVVTGRIERGVIKVGDEVEIVGLRSTQKTICTGVEMFKKELDQGQAGDNVGILLRGIKREDVERGQVLAKPGTITPHCSFEAEVYVLTKEEGGRHTPFFQNYRPQFYCRTTDVTGEIALLSGKEMVMPGDHATLSVNLVAPIAMDQGLSFAIREGGKTIGAGKVSKIIK.

One can recognise a tr-type G domain in the interval 9 to 204; the sequence is KPHCNIGTIG…SIDDYIPQPT (196 aa). Positions 18–25 are G1; sequence GHVDHGKT. A GTP-binding site is contributed by 18-25; sequence GHVDHGKT. Mg(2+) is bound at residue threonine 25. Positions 61–65 are G2; that stretch reads GITIQ. The tract at residues 82–85 is G3; that stretch reads DCPG. GTP is bound by residues 82–86 and 137–140; these read DCPGH and NKID. Residues 137–140 form a G4 region; it reads NKID. The G5 stretch occupies residues 174–176; the sequence is SAL.

It belongs to the TRAFAC class translation factor GTPase superfamily. Classic translation factor GTPase family. EF-Tu/EF-1A subfamily. In terms of assembly, monomer.

It localises to the cytoplasm. The catalysed reaction is GTP + H2O = GDP + phosphate + H(+). Functionally, GTP hydrolase that promotes the GTP-dependent binding of aminoacyl-tRNA to the A-site of ribosomes during protein biosynthesis. In Orientia tsutsugamushi (strain Boryong) (Rickettsia tsutsugamushi), this protein is Elongation factor Tu 2.